A 142-amino-acid chain; its full sequence is Small ribosomal subunit protein uS11 (142 aa).

The disordered stretch occupies residues 1-21 (MPPKTRGAVRKPRRKDKKNIA). Basic residues predominate over residues 7-17 (GAVRKPRRKDK).

It belongs to the universal ribosomal protein uS11 family. Part of the 30S ribosomal subunit. Interacts with proteins S7 and S18. Binds to IF-3.

Its function is as follows. Located on the platform of the 30S subunit, it bridges several disparate RNA helices of the 16S rRNA. Forms part of the Shine-Dalgarno cleft in the 70S ribosome. This is Small ribosomal subunit protein uS11 from Paenarthrobacter aurescens (strain TC1).